A 477-amino-acid chain; its full sequence is Protein DETOXIFICATION 5 (477 aa).

Transmembrane regions (helical) follow at residues 38 to 58 (AAPMATVTVSQYLLPVISVMV), 72 to 92 (LATAFANVSGFGIMYGLVGAL), 113 to 133 (FSAIVSNVPIVVLISILWFYM), 146 to 166 (ISKVAGSYAVCLIPALLAQAV), 187 to 207 (AITTLLFHIPVCLILVYAFGL), 211 to 231 (GAALAIGLSYWFNVLILALYV), 263 to 283 (AAMTTIEWSLFELLILSSGLL), 292 to 312 (VLSICLTTSSLHCVIPMGIGA), 333 to 353 (AVFAGIFLWFLEATICSTLLF), 376 to 396 (LSSLLCLSFMVDGFSSVLDGV), 411 to 431 (VVAYYLLGAPVGFFLGFWGHM), and 436 to 456 (LWIGVIVGSTAQGIILAIVTA).

It belongs to the multi antimicrobial extrusion (MATE) (TC 2.A.66.1) family.

It is found in the membrane. The chain is Protein DETOXIFICATION 5 from Arabidopsis thaliana (Mouse-ear cress).